The following is a 343-amino-acid chain: ATP-dependent 6-phosphofructokinase (343 aa).

ATP-binding positions include G10 and 103–106 (GEGT). E104 provides a ligand contact to Mg(2+). Substrate is bound by residues 126–128 (TID), R163, 170–172 (MGR), E223, R267, and 273–276 (HVQR). Catalysis depends on D128, which acts as the Proton acceptor.

It belongs to the phosphofructokinase type A (PFKA) family. Mixed-substrate PFK group III subfamily. As to quaternary structure, homodimer or homotetramer. Mg(2+) is required as a cofactor.

The protein localises to the cytoplasm. It catalyses the reaction beta-D-fructose 6-phosphate + ATP = beta-D-fructose 1,6-bisphosphate + ADP + H(+). It participates in carbohydrate degradation; glycolysis; D-glyceraldehyde 3-phosphate and glycerone phosphate from D-glucose: step 3/4. Functionally, catalyzes the phosphorylation of D-fructose 6-phosphate to fructose 1,6-bisphosphate by ATP, the first committing step of glycolysis. This is ATP-dependent 6-phosphofructokinase from Mycobacterium leprae (strain TN).